We begin with the raw amino-acid sequence, 209 residues long: ATP-dependent Clp protease proteolytic subunit 2 (209 aa).

Residue S106 is the Nucleophile of the active site. H131 is an active-site residue.

It belongs to the peptidase S14 family. In terms of assembly, fourteen ClpP subunits assemble into 2 heptameric rings which stack back to back to give a disk-like structure with a central cavity, resembling the structure of eukaryotic proteasomes.

The protein resides in the cytoplasm. The catalysed reaction is Hydrolysis of proteins to small peptides in the presence of ATP and magnesium. alpha-casein is the usual test substrate. In the absence of ATP, only oligopeptides shorter than five residues are hydrolyzed (such as succinyl-Leu-Tyr-|-NHMec, and Leu-Tyr-Leu-|-Tyr-Trp, in which cleavage of the -Tyr-|-Leu- and -Tyr-|-Trp bonds also occurs).. Functionally, cleaves peptides in various proteins in a process that requires ATP hydrolysis. Has a chymotrypsin-like activity. Plays a major role in the degradation of misfolded proteins. The polypeptide is ATP-dependent Clp protease proteolytic subunit 2 (Rhizobium etli (strain ATCC 51251 / DSM 11541 / JCM 21823 / NBRC 15573 / CFN 42)).